We begin with the raw amino-acid sequence, 616 residues long: Protein cereblon (616 aa).

Disordered regions lie at residues 1–39 (MDEEETAEINAQEQEVAGSAGEAAAGPSGAEVQPNDDSV), 63–137 (FGPS…AMPR), and 182–220 (SQERRRSRNSDEVSPEAEDDELPEHPPPPPPRPPIDIDM). Residues 11–32 (AQEQEVAGSAGEAAAGPSGAEV) are compositionally biased toward low complexity. Acidic residues predominate over residues 96-107 (SEEDIVLDDGTE). The segment covering 183–192 (QERRRSRNSD) has biased composition (basic and acidic residues). Positions 194–203 (VSPEAEDDEL) are enriched in acidic residues. Pro residues predominate over residues 206–215 (HPPPPPPRPP). The Lon N-terminal domain occupies 257 to 482 (HMLIFLHQYI…LIGGILKEET (226 aa)). The CULT domain occupies 481 to 590 (ETLFYCRYCN…LAGSSVRIGK (110 aa)). Zn(2+) contacts are provided by Cys486, Cys489, Cys555, and Cys558.

Belongs to the CRBN family. Likely a component of a DCX (DDB1-CUL4-X-box) protein ligase complex. May interact with pic/DDB1. Post-translationally, ubiquitinated.

Its subcellular location is the nucleus. It functions in the pathway protein modification; protein ubiquitination. In terms of biological role, substrate recognition component of a DCX (DDB1-CUL4-X-box) E3 protein ligase complex that mediates the ubiquitination and subsequent proteasomal degradation of target proteins. Has an essential role in mediating growth by negatively regulating insulin signaling. It also has a role in maintaining presynaptic function in the neuromuscular junction synapses of third-instar larvae. This Drosophila persimilis (Fruit fly) protein is Protein cereblon.